A 490-amino-acid polypeptide reads, in one-letter code: Cardiolipin synthase A (490 aa).

The next 2 membrane-spanning stretches (helical) occupy residues 20 to 40 and 49 to 69; these read LGLL…HAVL and IAWA…YLVF. 2 consecutive PLD phosphodiesterase domains span residues 229 to 256 and 403 to 430; these read VNFR…GVEY and QPGF…DNRS. Residues H234, K236, D241, H408, K410, and D415 contribute to the active site.

The protein belongs to the phospholipase D family. Cardiolipin synthase subfamily. ClsA sub-subfamily.

It is found in the cell inner membrane. It carries out the reaction 2 a 1,2-diacyl-sn-glycero-3-phospho-(1'-sn-glycerol) = a cardiolipin + glycerol. In terms of biological role, catalyzes the reversible phosphatidyl group transfer from one phosphatidylglycerol molecule to another to form cardiolipin (CL) (diphosphatidylglycerol) and glycerol. The chain is Cardiolipin synthase A from Pseudomonas aeruginosa (strain LESB58).